The primary structure comprises 1689 residues: Cullin-7 (1689 aa).

Residues 349-422 (RASFASFNTY…HWHMLEILGF (74 aa)) form the CPH domain. In terms of domain architecture, DOC spans 793–972 (PIQIPFFDVF…HTRLFYMVRA (180 aa)). Over residues 1321 to 1337 (VAHEDSGREDKSKKEEA) the composition is skewed to basic and acidic residues. The disordered stretch occupies residues 1321 to 1371 (VAHEDSGREDKSKKEEAIGEAAAVAMAEEEDQGKKEEGEEEGEGEDEEEER). The segment covering 1358-1370 (GEEEGEGEDEEEE) has biased composition (acidic residues). Residue lysine 1567 forms a Glycyl lysine isopeptide (Lys-Gly) (interchain with G-Cter in NEDD8) linkage.

It belongs to the cullin family. In terms of assembly, component of the 3M complex, composed of core components CUL7, CCDC8 and OBSL1. Component of the Cul7-RING(FBXW8) complex consisting of CUL7, RBX1, SKP1 and FBXW8. Within the Cul7-RING(FBXW8) complex interacts with FBXW8 and RBX1, but not with SKP1. Interacts with CUL1 (via the C-terminal domain); the interaction seems to be mediated by FBXW8; it is likely specific to FBXW8, but not other F-box proteins. Interacts (via the CPH domain) with p53/TP53; the interaction preferentially involves tetrameric and dimeric p53/TP53; this interaction recruits p53/TP53 for ubiquitination by neddylated CUL1-RBX1. The CUL7-CUL9 heterodimer seems to interact specifically with p53/TP53. Interacts with FBXW8; interaction is mutually exclusive of binding to CUL9 or p53/TP53. Interacts with CUL9; leading to inhibited CUL9 activity. Interacts with OBSL1. Interacts (as part of the 3M complex) with HDAC4 and HDAC5; it is negatively regulated by ANKRA2.

It localises to the cytoplasm. The protein localises to the cytoskeleton. The protein resides in the microtubule organizing center. It is found in the centrosome. Its subcellular location is the perinuclear region. It localises to the golgi apparatus. It functions in the pathway protein modification; protein ubiquitination. In terms of biological role, core component of the 3M and Cul7-RING(FBXW8) complexes, which mediate the ubiquitination and subsequent proteasomal degradation of target proteins. Core component of the 3M complex, a complex required to regulate microtubule dynamics and genome integrity. It is unclear how the 3M complex regulates microtubules, it could act by controlling the level of a microtubule stabilizer. The Cul7-RING(FBXW8) complex alone lacks ubiquitination activity and does not promote polyubiquitination and proteasomal degradation of p53/TP53. However it mediates recruitment of p53/TP53 for ubiquitination by neddylated CUL1-RBX1. Interaction with CUL9 is required to inhibit CUL9 activity and ubiquitination of BIRC5. The Cul7-RING(FBXW8) complex also mediates ubiquitination and consequent degradation of target proteins such as GORASP1, IRS1 and MAP4K1/HPK1. Ubiquitination of GORASP1 regulates Golgi morphogenesis and dendrite patterning in brain. Mediates ubiquitination and degradation of IRS1 in a mTOR-dependent manner: the Cul7-RING(FBXW8) complex recognizes and binds IRS1 previously phosphorylated by S6 kinase (RPS6KB1 or RPS6KB2). The Cul7-RING(FBXW8) complex also mediates ubiquitination of MAP4K1/HPK1: recognizes and binds autophosphorylated MAP4K1/HPK1, leading to its degradation, thereby affecting cell proliferation and differentiation. Acts as a regulator in trophoblast cell epithelial-mesenchymal transition and placental development. While the Cul7-RING(FBXW8) and the 3M complexes are associated and involved in common processes, CUL7 and the Cul7-RING(FBXW8) complex may have additional functions. Probably plays a role in the degradation of proteins involved in endothelial proliferation and/or differentiation. The polypeptide is Cullin-7 (Cul7) (Mus musculus (Mouse)).